The primary structure comprises 378 residues: Biotin synthase (378 aa).

The Radical SAM core domain maps to 68-292; it reads NEVQISTLLS…IAVTRICCPS (225 aa). [4Fe-4S] cluster is bound by residues Cys-83, Cys-87, and Cys-90. The [2Fe-2S] cluster site is built by Cys-129, Cys-160, Cys-220, and Arg-296.

It belongs to the radical SAM superfamily. Biotin synthase family. In terms of assembly, homodimer. [4Fe-4S] cluster serves as cofactor. It depends on [2Fe-2S] cluster as a cofactor.

The enzyme catalyses (4R,5S)-dethiobiotin + (sulfur carrier)-SH + 2 reduced [2Fe-2S]-[ferredoxin] + 2 S-adenosyl-L-methionine = (sulfur carrier)-H + biotin + 2 5'-deoxyadenosine + 2 L-methionine + 2 oxidized [2Fe-2S]-[ferredoxin]. It functions in the pathway cofactor biosynthesis; biotin biosynthesis; biotin from 7,8-diaminononanoate: step 2/2. Its function is as follows. Catalyzes the conversion of dethiobiotin (DTB) to biotin by the insertion of a sulfur atom into dethiobiotin via a radical-based mechanism. This Psychrobacter arcticus (strain DSM 17307 / VKM B-2377 / 273-4) protein is Biotin synthase.